A 165-amino-acid polypeptide reads, in one-letter code: MAFENKIVEAFIEIPTGSQNKYEFDKERGIFKLDRVLYSPMFYPAEYGYLQNTLALDGDPLDILVITTNPTFPGCVIDTRVIGYLNMVDSGEEDAKLIGVPVEDPRFDEVRSIEDLPQHKLKEIAHFFERYKDLQGKRTEIGTWEGPEAAAKLIDECIARYNEQK.

Substrate-binding residues include Lys-21, Arg-35, and Tyr-47. Residues Asp-57, Asp-62, and Asp-94 each coordinate Mg(2+). Tyr-131 contacts substrate.

Belongs to the PPase family. In terms of assembly, homohexamer. It depends on Mg(2+) as a cofactor.

The protein localises to the cytoplasm. It catalyses the reaction diphosphate + H2O = 2 phosphate + H(+). Its function is as follows. Catalyzes the hydrolysis of inorganic pyrophosphate (PPi) forming two phosphate ions. This is Inorganic pyrophosphatase from Geobacillus stearothermophilus (Bacillus stearothermophilus).